A 194-amino-acid chain; its full sequence is Peptidyl-tRNA hydrolase (194 aa).

Position 17 (Tyr-17) interacts with tRNA. His-22 (proton acceptor) is an active-site residue. TRNA-binding residues include Tyr-68, Asn-70, and Asn-116.

This sequence belongs to the PTH family. Monomer.

It localises to the cytoplasm. It catalyses the reaction an N-acyl-L-alpha-aminoacyl-tRNA + H2O = an N-acyl-L-amino acid + a tRNA + H(+). Its function is as follows. Hydrolyzes ribosome-free peptidyl-tRNAs (with 1 or more amino acids incorporated), which drop off the ribosome during protein synthesis, or as a result of ribosome stalling. Functionally, catalyzes the release of premature peptidyl moieties from peptidyl-tRNA molecules trapped in stalled 50S ribosomal subunits, and thus maintains levels of free tRNAs and 50S ribosomes. In Azotobacter vinelandii (strain DJ / ATCC BAA-1303), this protein is Peptidyl-tRNA hydrolase.